The primary structure comprises 260 residues: Carbonic anhydrase 2 (260 aa).

Residue Ser2 is modified to N-acetylserine. Position 2 is a phosphoserine (Ser2). Positions 3-259 (HHWGYSKSNG…LKNRKIKASF (257 aa)) constitute an Alpha-carbonic anhydrase domain. The segment at 16 to 39 (WHKEFPIANGDRQSPVDIDTGTAQ) is disordered. Catalysis depends on His64, which acts as the Proton donor/acceptor. Residue Ser87 is modified to Phosphoserine. Zn(2+) is bound by residues His94, His96, and His119. Ser165 is subject to Phosphoserine. Substrate is bound at residue 198-199 (TT). Residue Ser232 is modified to Phosphoserine.

The protein belongs to the alpha-carbonic anhydrase family. As to quaternary structure, interacts with SLC4A4 and SLC26A6. Interaction with SLC4A7 regulates SLC4A7 transporter activity. Zn(2+) serves as cofactor.

The protein resides in the cytoplasm. Its subcellular location is the cell membrane. The catalysed reaction is hydrogencarbonate + H(+) = CO2 + H2O. The enzyme catalyses urea = cyanamide + H2O. With respect to regulation, inhibited by acetazolamide. In terms of biological role, catalyzes the reversible hydration of carbon dioxide. Can also hydrate cyanamide to urea. Involved in the regulation of fluid secretion into the anterior chamber of the eye. Essential for bone resorption and osteoclast differentiation. Contributes to intracellular pH regulation in the duodenal upper villous epithelium during proton-coupled peptide absorption. Stimulates the chloride-bicarbonate exchange activity of SLC26A6. This chain is Carbonic anhydrase 2 (Ca2), found in Rattus norvegicus (Rat).